Consider the following 253-residue polypeptide: Phosphate import ATP-binding protein PstB (253 aa).

The region spanning 7–248 (IDARDVNFWY…PEKEATQNYI (242 aa)) is the ABC transporter domain. An ATP-binding site is contributed by 39 to 46 (GPSGCGKS).

Belongs to the ABC transporter superfamily. Phosphate importer (TC 3.A.1.7) family. The complex is composed of two ATP-binding proteins (PstB), two transmembrane proteins (PstC and PstA) and a solute-binding protein (PstS).

The protein localises to the cell inner membrane. The enzyme catalyses phosphate(out) + ATP + H2O = ADP + 2 phosphate(in) + H(+). Part of the ABC transporter complex PstSACB involved in phosphate import. Responsible for energy coupling to the transport system. The protein is Phosphate import ATP-binding protein PstB of Bacteroides fragilis (strain ATCC 25285 / DSM 2151 / CCUG 4856 / JCM 11019 / LMG 10263 / NCTC 9343 / Onslow / VPI 2553 / EN-2).